The sequence spans 277 residues: Probable endonuclease 4 (277 aa).

Residues His-67, His-107, Glu-142, Asp-176, His-179, His-211, Asp-224, His-226, and Glu-256 each coordinate Zn(2+).

It belongs to the AP endonuclease 2 family. The cofactor is Zn(2+).

The enzyme catalyses Endonucleolytic cleavage to 5'-phosphooligonucleotide end-products.. Endonuclease IV plays a role in DNA repair. It cleaves phosphodiester bonds at apurinic or apyrimidinic (AP) sites, generating a 3'-hydroxyl group and a 5'-terminal sugar phosphate. The polypeptide is Probable endonuclease 4 (Akkermansia muciniphila (strain ATCC BAA-835 / DSM 22959 / JCM 33894 / BCRC 81048 / CCUG 64013 / CIP 107961 / Muc)).